The following is a 602-amino-acid chain: Toxin YwqJ (602 aa).

One can recognise an LXG domain in the interval 1–235 (MSKVFESKSL…TTYIDAKTQQ (235 aa)). 2 coiled-coil regions span residues 6–41 (ESKSLIEEAKSRKKQYETLEEQLNTLKKAFQGVADL) and 227–251 (TYIDAKTQQAEARRLQEKAEEEANK).

It in the N-terminal section; belongs to the LXG family. In terms of assembly, probably interacts with cognate immunity protein YwqK but not with non-cognate immunity proteins. The interaction inhibits the toxic activity of YwqJ.

It localises to the secreted. Its function is as follows. Toxic component of one of 6 LXG toxin-immunity modules in this strain. They promote kin selection, mediate competition in biofilms, and drive spatial segregation of different strains, indicating that LXG toxins may help avoid warfare between strains in biofilms. Mediates intercellular competition during biofilm formation; disruption of the operon disadvantages the bacteria, but overexpression of the cognate immunity protein restores growth in competition with wild-type. Overexpression alone in situ causes growth arrest but not cell lysis; no effect is seen on DNA or rRNA. Co-overexpression with cognate immunity protein YwqK does not cause growth arrest. The toxic effect is dependent on the epsA and tapA operons which are required for biofilm formation. Its toxic effects are probably neutralized by its cognate immunity protein YwqK, but not by immunity proteins specific to other toxins with the LXG domain. May have deaminase activity. This chain is Toxin YwqJ (ywqJ), found in Bacillus subtilis (strain 168).